Here is a 216-residue protein sequence, read N- to C-terminus: ATP-dependent Clp protease proteolytic subunit (216 aa).

S120 serves as the catalytic Nucleophile. The active site involves H145.

Belongs to the peptidase S14 family. As to quaternary structure, fourteen ClpP subunits assemble into 2 heptameric rings which stack back to back to give a disk-like structure with a central cavity, resembling the structure of eukaryotic proteasomes.

The protein localises to the cytoplasm. It carries out the reaction Hydrolysis of proteins to small peptides in the presence of ATP and magnesium. alpha-casein is the usual test substrate. In the absence of ATP, only oligopeptides shorter than five residues are hydrolyzed (such as succinyl-Leu-Tyr-|-NHMec, and Leu-Tyr-Leu-|-Tyr-Trp, in which cleavage of the -Tyr-|-Leu- and -Tyr-|-Trp bonds also occurs).. Cleaves peptides in various proteins in a process that requires ATP hydrolysis. Has a chymotrypsin-like activity. Plays a major role in the degradation of misfolded proteins. The sequence is that of ATP-dependent Clp protease proteolytic subunit from Cupriavidus necator (strain ATCC 17699 / DSM 428 / KCTC 22496 / NCIMB 10442 / H16 / Stanier 337) (Ralstonia eutropha).